A 99-amino-acid chain; its full sequence is UPF0235 protein HS_1657 (99 aa).

It belongs to the UPF0235 family.

The polypeptide is UPF0235 protein HS_1657 (Histophilus somni (strain 129Pt) (Haemophilus somnus)).